The chain runs to 313 residues: CRISPR-associated endonuclease Cas1 1 (313 aa).

Residues E144, H211, and D224 each contribute to the Mn(2+) site. Positions P288–G313 are disordered.

Belongs to the CRISPR-associated endonuclease Cas1 family. As to quaternary structure, homodimer, forms a heterotetramer with a Cas2 homodimer. The cofactor is Mg(2+). It depends on Mn(2+) as a cofactor.

In terms of biological role, CRISPR (clustered regularly interspaced short palindromic repeat), is an adaptive immune system that provides protection against mobile genetic elements (viruses, transposable elements and conjugative plasmids). CRISPR clusters contain spacers, sequences complementary to antecedent mobile elements, and target invading nucleic acids. CRISPR clusters are transcribed and processed into CRISPR RNA (crRNA). Acts as a dsDNA endonuclease. Involved in the integration of spacer DNA into the CRISPR cassette. This Rhodospirillum rubrum (strain ATCC 11170 / ATH 1.1.1 / DSM 467 / LMG 4362 / NCIMB 8255 / S1) protein is CRISPR-associated endonuclease Cas1 1.